Consider the following 120-residue polypeptide: Flagellar protein FliT (120 aa).

Positions 1-50 (MENLSPLLIEYQGLLKLIRNIKAMALNGLWDDVVEQEIVYIQSIERISQI) are required for homodimerization. The interval 60 to 98 (VQLQFRQLLQDILDTESQVKELLQNRMQELAVLIQQSQN) is fliD binding.

This sequence belongs to the FliT family. As to quaternary structure, homodimer. Interacts with FliD and FlhC.

It is found in the cytoplasm. It localises to the cytosol. Dual-function protein that regulates the transcription of class 2 flagellar operons and that also acts as an export chaperone for the filament-capping protein FliD. As a transcriptional regulator, acts as an anti-FlhDC factor; it directly binds FlhC, thus inhibiting the binding of the FlhC/FlhD complex to class 2 promoters, resulting in decreased expression of class 2 flagellar operons. As a chaperone, effects FliD transition to the membrane by preventing its premature polymerization, and by directing it to the export apparatus. The sequence is that of Flagellar protein FliT from Dickeya chrysanthemi (Pectobacterium chrysanthemi).